The sequence spans 493 residues: Glutamyl-tRNA(Gln) amidotransferase subunit A (493 aa).

Active-site charge relay system residues include lysine 79 and serine 159. Serine 183 (acyl-ester intermediate) is an active-site residue.

The protein belongs to the amidase family. GatA subfamily. Heterotrimer of A, B and C subunits.

It catalyses the reaction L-glutamyl-tRNA(Gln) + L-glutamine + ATP + H2O = L-glutaminyl-tRNA(Gln) + L-glutamate + ADP + phosphate + H(+). Allows the formation of correctly charged Gln-tRNA(Gln) through the transamidation of misacylated Glu-tRNA(Gln) in organisms which lack glutaminyl-tRNA synthetase. The reaction takes place in the presence of glutamine and ATP through an activated gamma-phospho-Glu-tRNA(Gln). This Allorhizobium ampelinum (strain ATCC BAA-846 / DSM 112012 / S4) (Agrobacterium vitis (strain S4)) protein is Glutamyl-tRNA(Gln) amidotransferase subunit A.